Here is a 673-residue protein sequence, read N- to C-terminus: FLYWCH-type zinc finger-containing protein 1 (673 aa).

Positions M1–T62 are disordered. At S21 the chain carries Phosphoserine. Residues V47–T62 show a composition bias toward polar residues. FLYWCH-type zinc fingers lie at residues F92–H150 and F235–H293. Residue K110 forms a Glycyl lysine isopeptide (Lys-Gly) (interchain with G-Cter in SUMO2) linkage. The segment covering D147 to D158 has biased composition (basic and acidic residues). Residues D147–V178 form a disordered region. 2 positions are modified to phosphoserine: S294 and S339. The segment at L351 to F402 is disordered. Basic residues predominate over residues S354–K379. 3 FLYWCH-type zinc fingers span residues F402–H460, F490–H548, and F581–H639. The tract at residues L646–H673 is disordered. Over residues A659–H673 the composition is skewed to basic residues. K666 is covalently cross-linked (Glycyl lysine isopeptide (Lys-Gly) (interchain with G-Cter in SUMO2)).

In terms of assembly, interacts with CTNNB1 (when unphosphorylated), perhaps preventing interaction of CTNNB1 with TCF4, and thereby regulating transcription activation; phosphorylation of CTNNB1 may inhibit the interaction.

Its subcellular location is the nucleus. The protein localises to the chromosome. It localises to the centromere. Functionally, transcription cofactor. Negatively regulates transcription activation by catenin beta-1 CTNNB1, perhaps acting by competing with TCF4 for CTNNB1 binding. May play a role in DNA-damage response signaling. Binds specifically to DNA sequences at peri-centromeric chromatin loci. The polypeptide is FLYWCH-type zinc finger-containing protein 1 (Flywch1) (Mus musculus (Mouse)).